A 113-amino-acid chain; its full sequence is MLLLFCICCAFIKLVLAEVNLTFVDYAKLPPKYAELLANLTDQHGMVLFDTADVRFEAYNYLVNNITEINTDTDACLCQLLTGQYTTDCYIFDDSVYEGPENINPSTSILIKD.

Residues 1–17 (MLLLFCICCAFIKLVLA) form the signal peptide. N-linked (GlcNAc...) asparagine glycosylation is found at N20, N39, and N65.

It belongs to the UPF0321 family.

The protein is UPF0321 protein C569.02c of Schizosaccharomyces pombe (strain 972 / ATCC 24843) (Fission yeast).